Here is a 291-residue protein sequence, read N- to C-terminus: 4-hydroxy-tetrahydrodipicolinate synthase (291 aa).

Residue Thr-44 participates in pyruvate binding. Tyr-132 functions as the Proton donor/acceptor in the catalytic mechanism. Lys-160 (schiff-base intermediate with substrate) is an active-site residue. Val-202 serves as a coordination point for pyruvate.

This sequence belongs to the DapA family. In terms of assembly, homotetramer; dimer of dimers.

The protein localises to the cytoplasm. It carries out the reaction L-aspartate 4-semialdehyde + pyruvate = (2S,4S)-4-hydroxy-2,3,4,5-tetrahydrodipicolinate + H2O + H(+). The protein operates within amino-acid biosynthesis; L-lysine biosynthesis via DAP pathway; (S)-tetrahydrodipicolinate from L-aspartate: step 3/4. Functionally, catalyzes the condensation of (S)-aspartate-beta-semialdehyde [(S)-ASA] and pyruvate to 4-hydroxy-tetrahydrodipicolinate (HTPA). The sequence is that of 4-hydroxy-tetrahydrodipicolinate synthase from Clostridium perfringens (strain ATCC 13124 / DSM 756 / JCM 1290 / NCIMB 6125 / NCTC 8237 / Type A).